The chain runs to 133 residues: DCPSDWSSFKQYCYQIIKQLKTWEDAERFCLDQMKGAHLVSIESYREAVFVAELLSENVKTTKYHVWIGLSVQNKGQQCSSEWSDGSTVSYENLVKPNPKKCFVLKKESEFRTWSNVYCEQKHIFMCKFLGSR.

3 disulfides stabilise this stretch: Cys-2-Cys-13, Cys-30-Cys-127, and Cys-102-Cys-119. Positions 9–128 (FKQYCYQIIK…CEQKHIFMCK (120 aa)) constitute a C-type lectin domain.

The protein belongs to the snaclec family. As to quaternary structure, homodimer (non-covalently linked) of heterodimer of alpha and beta subunits (disulfide-linked). As to expression, expressed by the venom gland.

It is found in the secreted. Its function is as follows. Snaclec that induces platelet aggregation without any cofactor in a dose-dependent manner. Its platelet aggregation effect is blocked by echicetin, suggesting it is a GPIb-binding protein which binds to the same or a closely related GPIb site on platelets as echicetin. The polypeptide is Snaclec purpureotin subunit alpha (Trimeresurus purpureomaculatus (Mangrove pit viper)).